Reading from the N-terminus, the 261-residue chain is 5'-nucleotidase SurE (261 aa).

The a divalent metal cation site is built by aspartate 8, aspartate 9, serine 43, and asparagine 96.

This sequence belongs to the SurE nucleotidase family. It depends on a divalent metal cation as a cofactor.

It is found in the cytoplasm. It catalyses the reaction a ribonucleoside 5'-phosphate + H2O = a ribonucleoside + phosphate. Nucleotidase that shows phosphatase activity on nucleoside 5'-monophosphates. This is 5'-nucleotidase SurE from Roseobacter denitrificans (strain ATCC 33942 / OCh 114) (Erythrobacter sp. (strain OCh 114)).